The chain runs to 163 residues: MKYIAKKCGVRFQPPAMILIYENEAEGKSRQRIMPVRNFSKFSDCTRAAEQLKNNPRHKSYLEQVSLKQLEKLFVFLRGSLQGQSLAETMEQIQRETTIDPEEDLNKLDDKELAKRKSIMDELFEKNQKRKDDPSFVYDVEVEFPQDEQLQSCSWDTASVDEF.

It belongs to the CEP19 family. In terms of assembly, interacts with CEP43; this interaction is required for its localization to the mother centriole. Interacts (via residues 121-150) with RABL2B. Interacts (via C-terminus) with CEP350; this interaction is required for its localization to the mother centriole.

The protein resides in the cytoplasm. It localises to the cytoskeleton. Its subcellular location is the microtubule organizing center. The protein localises to the centrosome. It is found in the centriole. The protein resides in the spindle pole. It localises to the cilium basal body. In terms of biological role, required for ciliation. Recruits the RABL2B GTPase to the ciliary base to initiate ciliation. After specifically capturing the activated GTP-bound RABL2B, the CEP19-RABL2B complex binds intraflagellar transport (IFT) complex B from the large pool pre-docked at the base of the cilium and thus triggers its entry into the cilia. Involved in the early steps in cilia formation by recruiting the ciliary vesicles (CVs) to the distal end of the mother centriole where they fuse to initiate cilium assembly. Involved in microtubule (MT) anchoring at centrosomes. The protein is Centrosomal protein of 19 kDa (Cep19) of Rattus norvegicus (Rat).